The chain runs to 160 residues: uncharacterized protein (160 aa).

A helical membrane pass occupies residues 27-47; sequence VMNSYFIAGCGPAVCYYAVSW.

The protein localises to the membrane. This is an uncharacterized protein from Homo sapiens (Human).